The sequence spans 383 residues: Multidrug resistance protein MexA (383 aa).

The N-terminal stretch at 1–23 is a signal peptide; it reads MQRTPAMRVLVPALLVAISALSG. A lipid anchor (N-palmitoyl cysteine) is attached at Cys-24. Cys-24 carries S-diacylglycerol cysteine lipidation. Positions 97–151 form a coiled coil; that stretch reads ATYEADYQSAQANLASTQEQAQRYKLLVADQAVSKQQYADANAAYLQSKAAVEQA.

The protein belongs to the membrane fusion protein (MFP) (TC 8.A.1) family. In terms of assembly, component of the MexAB-OprM multidrug efflux complex, composed of six MexA subunits forming a hexameric tube, binding to a MexB trimer, which interact with the trimeric OprM outer membrane channel protein. OprM is thought to not directly contact MexB; instead, MexA joins MexB and OprM by forming a funnel-like hexamer anchored to the inner membrane. MexA may initially form a hexameric ring complex with MexB prior to OprM, then OprM undergoes a conformational change as it contacts MexA, allowing the periplasmic gate to open. It is thought that, under high intracellular substrate concentration, MexB ejects substrate into the tunnel formed by MexA-OprM; as the substrate level declines, conformational changes in MexB cause efflux to reduce and stop and the complex shifts to the closed state. MexB subunit acts as a substrate:proton antiporter and activity is enhanced significantly when in complex with MexA and OprM, in vitro.

It localises to the cell inner membrane. Its activity is regulated as follows. Export of antibiotics and solvents is dramatically decreased in the presence of the protonophore carbonyl cyanide m-chlorophenylhydrazone (CCCP), therefore may be driven by a proton gradient. Antibiotic efflux is inhibited by pyridopyrimidine derivatives, such as ABI-PP, acting by binding to a hydrophobic pocket in MexB. In terms of biological role, the periplasmic linker component of the MexAB-OprM efflux system that confers multidrug resistance. Functions as the major efflux pump for n-hexane and p-xylene efflux. Has been shown in one study to be involved in the active efflux of the autoinducer N-(3-oxododecanoyl) homoserine lactone, thereby playing an indirect role in quorum-sensing; but has been shown in another study not to be involved in efflux of this autoinducer. Over-expression of the pump increases antibiotic and solvent efflux capacities. Implicated in the secretion of the siderophore pyoverdine. The polypeptide is Multidrug resistance protein MexA (mexA) (Pseudomonas aeruginosa (strain ATCC 15692 / DSM 22644 / CIP 104116 / JCM 14847 / LMG 12228 / 1C / PRS 101 / PAO1)).